Consider the following 340-residue polypeptide: Delta-aminolevulinic acid dehydratase (340 aa).

Cys-133, Cys-135, and Cys-143 together coordinate Zn(2+). Lys-210 functions as the Schiff-base intermediate with substrate in the catalytic mechanism. 2 residues coordinate 5-aminolevulinate: Arg-220 and Arg-232. Catalysis depends on Lys-263, which acts as the Schiff-base intermediate with substrate. Residues Ser-290 and Tyr-329 each contribute to the 5-aminolevulinate site.

This sequence belongs to the ALAD family. Homooctamer. Requires Zn(2+) as cofactor.

The enzyme catalyses 2 5-aminolevulinate = porphobilinogen + 2 H2O + H(+). It functions in the pathway porphyrin-containing compound metabolism; protoporphyrin-IX biosynthesis; coproporphyrinogen-III from 5-aminolevulinate: step 1/4. Functionally, catalyzes an early step in the biosynthesis of tetrapyrroles. Binds two molecules of 5-aminolevulinate per subunit, each at a distinct site, and catalyzes their condensation to form porphobilinogen. The sequence is that of Delta-aminolevulinic acid dehydratase (HEM2) from Candida glabrata (strain ATCC 2001 / BCRC 20586 / JCM 3761 / NBRC 0622 / NRRL Y-65 / CBS 138) (Yeast).